We begin with the raw amino-acid sequence, 517 residues long: Alpha,alpha-trehalose-phosphate synthase [UDP-forming] 1 (517 aa).

Tyr98 and Asp152 together coordinate D-glucose 6-phosphate. UDP-binding residues include Arg288 and Lys293. Arg288 and Lys293 together coordinate UDP-alpha-D-glucose. Residue Arg326 coordinates D-glucose 6-phosphate. Position 387–395 (387–395 (DGMNLVAYE)) interacts with UDP-alpha-D-glucose. 391–395 (LVAYE) lines the UDP pocket. The interval 486–517 (FHAKKASFSDNNSENGEPSNGVETPAQEQVAQ) is disordered. Polar residues predominate over residues 493 to 517 (FSDNNSENGEPSNGVETPAQEQVAQ).

Belongs to the glycosyltransferase 20 family.

The enzyme catalyses D-glucose 6-phosphate + UDP-alpha-D-glucose = alpha,alpha-trehalose 6-phosphate + UDP + H(+). Its pathway is carbohydrate biosynthesis. Synthase catalytic subunit of the trehalose synthase complex that catalyzes the production of trehalose from glucose-6-phosphate and UDP-alpha-D-glucose in a two step process. The polypeptide is Alpha,alpha-trehalose-phosphate synthase [UDP-forming] 1 (Aspergillus niger).